The chain runs to 2057 residues: Rho guanine nucleotide exchange factor 17 (2057 aa).

Disordered regions lie at residues 20–361 (ERWS…DTGG), 375–461 (LASP…SNPD), and 481–559 (RVRK…LKPS). Phosphoserine occurs at positions 142 and 152. A compositionally biased stretch (low complexity) spans 227–249 (ARASSSSSIASSYPVSRSRAASS). Residues Ser-305 and Ser-308 each carry the phosphoserine modification. Over residues 314–323 (GGLGSAGGVG) the composition is skewed to gly residues. A phosphoserine mark is found at Ser-324, Ser-330, Ser-377, Ser-381, Ser-389, Ser-404, and Ser-414. Positions 382–391 (RGSSRYSSTE) are enriched in polar residues. The segment covering 440-451 (PLRDGGLDLDKN) has biased composition (basic and acidic residues). Position 456 is a phosphoserine (Ser-456). Low complexity predominate over residues 507-524 (EQSESTLSQSPTSPTTRP). Ser-538 and Ser-611 each carry phosphoserine. 2 disordered regions span residues 615-647 (AGDM…PEPL) and 663-952 (LSST…VRHA). The span at 663 to 672 (LSSTSAQTNH) shows a compositional bias: polar residues. Ser-689 carries the post-translational modification Phosphoserine. Residues Thr-692 and Thr-695 each carry the phosphothreonine modification. Positions 710–719 (PNGTELSNGE) are enriched in polar residues. Position 728 is a phosphoserine (Ser-728). Residues 747 to 760 (SVDSNLLGSLNSKT) show a composition bias toward polar residues. A compositionally biased stretch (basic and acidic residues) spans 820-829 (SLSDPSRRGE). Ser-906 carries the phosphoserine modification. Basic residues predominate over residues 909–920 (LTRRGSKKRPAR). The segment covering 922-931 (SHQELRREEG) has biased composition (basic and acidic residues). Residues 933–944 (QDQTGSLTQTRS) are compositionally biased toward polar residues. A phosphoserine mark is found at Ser-953 and Ser-994. Over residues 1015-1027 (GPVDLPCLPPSAP) the composition is skewed to pro residues. The segment at 1015-1054 (GPVDLPCLPPSAPPSTETKPSGAARATPDEPAPASKCCSK) is disordered. Positions 1059-1247 (MRKHVTMTLL…KQVAERINKG (189 aa)) constitute a DH domain. Ser-1324 is modified (phosphoserine). Disordered stretches follow at residues 1555 to 1713 (RCPR…SSRG) and 1983 to 2050 (CSTP…DSTN). The span at 1579-1589 (LDVEATAEEEA) shows a compositional bias: acidic residues. Residues 1638 to 1674 (SPSPSGTLQSQASQSTISSSFGNEETPSSKEATAETT) are compositionally biased toward low complexity.

Acts as a guanine nucleotide exchange factor (GEF) for RhoA GTPases. This chain is Rho guanine nucleotide exchange factor 17 (Arhgef17), found in Mus musculus (Mouse).